Here is a 798-residue protein sequence, read N- to C-terminus: Metabotropic glutamate receptor-like protein A (798 aa).

Residues 1–23 (MNKLKFLIILFITFLFNLKYINS) form the signal peptide. Topologically, residues 24–388 (LKQCKISVLL…DYSNSMKLGL (365 aa)) are extracellular. Residues N186, N275, and N320 are each glycosylated (N-linked (GlcNAc...) asparagine). Residues 389-409 (TIVSGFCILFCIISMVLVIMF) form a helical membrane-spanning segment. Over 410-419 (RHAKIIKSAS) the chain is Cytoplasmic. Residues 420–440 (PIFCLLILFGCIIIFSGCIIF) form a helical membrane-spanning segment. At 441–447 (SLSPTDG) the chain is on the extracellular side. Residues 448–468 (ICGARVWLLSIGYTIFLGSLL) traverse the membrane as a helical segment. At 469–494 (VKNWRIWLLFDNPKLKKRSITNWKLY) the chain is on the cytoplasmic side. Residues 495–515 (PFVAGILAADVLILALWQGLG) form a helical membrane-spanning segment. The Extracellular segment spans residues 516-545 (DIRSESRIGIDSLTKYQYANVCSSNDQGSV). The chain crosses the membrane as a helical span at residues 546–566 (ALYILLVFHGIKLLAACFISF). Residues 567 to 580 (KIKAVDIEEFNESK) lie on the Cytoplasmic side of the membrane. A helical transmembrane segment spans residues 581–601 (PIASSIYIITFCLFIVIPLMV). At 602-609 (SPQSVASQ) the chain is on the extracellular side. Residues 610-630 (VITIVVCAIVTTLISISLLFG) traverse the membrane as a helical segment. At 631–798 (SKFYMMATQG…NQSEIDPDDV (168 aa)) the chain is on the cytoplasmic side. The stretch at 714-771 (AEQDSKLDLENQNDENEIENNQNNQNNIVEDCQKVEKLEKDENLEKDENLEKDENLEK) forms a coiled coil. The span at 752–774 (EKDENLEKDENLEKDENLEKDNE) shows a compositional bias: basic and acidic residues. The interval 752–798 (EKDENLEKDENLEKDENLEKDNENQSIIQKKRLSKNFNQSEIDPDDV) is disordered.

It in the N-terminal section; belongs to the BMP lipoprotein family. This sequence in the C-terminal section; belongs to the G-protein coupled receptor 3 family. GABA-B receptor subfamily.

It is found in the membrane. The protein resides in the cytoplasm. Its subcellular location is the cell cortex. It localises to the perinuclear region. May play an important role in the terminal differentiation. The chain is Metabotropic glutamate receptor-like protein A (grlA) from Dictyostelium discoideum (Social amoeba).